We begin with the raw amino-acid sequence, 434 residues long: Chaperone SurA (434 aa).

A signal peptide spans Met-1–Ala-22. 2 consecutive PpiC domains span residues Asp-173–Asp-274 and Ile-283–Glu-383.

It is found in the periplasm. It catalyses the reaction [protein]-peptidylproline (omega=180) = [protein]-peptidylproline (omega=0). Chaperone involved in the correct folding and assembly of outer membrane proteins. Recognizes specific patterns of aromatic residues and the orientation of their side chains, which are found more frequently in integral outer membrane proteins. May act in both early periplasmic and late outer membrane-associated steps of protein maturation. This Shewanella sp. (strain MR-4) protein is Chaperone SurA.